The following is a 188-amino-acid chain: dCTP deaminase (188 aa).

Residues 111–116 (KSTYAR), 135–137 (TLE), Gln-156, Tyr-170, Lys-179, and Gln-180 each bind dCTP. The active-site Proton donor/acceptor is Glu-137.

It belongs to the dCTP deaminase family. In terms of assembly, homotrimer.

The enzyme catalyses dCTP + H2O + H(+) = dUTP + NH4(+). The protein operates within pyrimidine metabolism; dUMP biosynthesis; dUMP from dCTP (dUTP route): step 1/2. Functionally, catalyzes the deamination of dCTP to dUTP. The polypeptide is dCTP deaminase (Orientia tsutsugamushi (strain Ikeda) (Rickettsia tsutsugamushi)).